Reading from the N-terminus, the 444-residue chain is Transcription activator AKTR-1 (444 aa).

The segment at residues 16-43 (CDFCTQSKLRCNKNKPSCRRCTIQQQPC) is a DNA-binding region (zn(2)-C6 fungal-type). The segment at 49 to 87 (RRTGRPPKHPRKANDCQEANGQHGEQDPVTSTPGGSCQQ) is disordered. The span at 50–59 (RTGRPPKHPR) shows a compositional bias: basic residues. A compositionally biased stretch (polar residues) spans 76–87 (PVTSTPGGSCQQ).

Its subcellular location is the nucleus. Transcription factor that regulates the expression of the gene clusters that mediate the biosynthesis of the host-selective toxins (HSTs) AK-toxins responsible for Japanese pear black spot disease by the Japanese pear pathotype. AK-toxins are esters of 9,10-epoxy 8-hydroxy 9-methyldecatrienoic acid (EDA). On cellular level, AK-toxins affect plasma membrane of susceptible cells and cause a sudden increase in loss of K(+) after a few minutes of toxin treatment. This chain is Transcription activator AKTR-1, found in Alternaria alternata (Alternaria rot fungus).